The chain runs to 697 residues: Potassium-transporting ATPase ATP-binding subunit (697 aa).

4 helical membrane passes run 55-75, 79-99, 245-265, and 271-291; these read PIMF…FLPS, SIPG…VLFA, LTLI…YLGF, and VLVA…LSAI. The 4-aspartylphosphate intermediate role is filled by D324. ATP contacts are provided by residues D361, E365, 393-400, and K412; that span reads FKAETRMS. Mg(2+) contacts are provided by D535 and D539. The next 3 helical transmembrane spans lie at 605 to 625, 633 to 653, and 677 to 697; these read FAII…LNIM, AILS…PLAM, and GGVI…GLFI.

The protein belongs to the cation transport ATPase (P-type) (TC 3.A.3) family. Type IA subfamily. In terms of assembly, the system is composed of three essential subunits: KdpA, KdpB and KdpC.

It localises to the cell membrane. The catalysed reaction is K(+)(out) + ATP + H2O = K(+)(in) + ADP + phosphate + H(+). Part of the high-affinity ATP-driven potassium transport (or Kdp) system, which catalyzes the hydrolysis of ATP coupled with the electrogenic transport of potassium into the cytoplasm. This subunit is responsible for energy coupling to the transport system and for the release of the potassium ions to the cytoplasm. This chain is Potassium-transporting ATPase ATP-binding subunit, found in Bacillus anthracis (strain CDC 684 / NRRL 3495).